We begin with the raw amino-acid sequence, 118 residues long: Telomere bouquet protein 2 (118 aa).

As to quaternary structure, interacts with bqt1. The bqt1-bqt2-sad1 complex binds rap1.

The protein resides in the cytoplasm. Its subcellular location is the nucleus. The protein localises to the cytoskeleton. It is found in the microtubule organizing center. It localises to the spindle pole body. The protein resides in the chromosome. Its subcellular location is the telomere. Functionally, involved in chromosome segregation. During meiotic prophase, connects telomeres to the spindle pole body by forming a bridge between the telomere protein rap1 and the spindle pole body protein sad1. This chain is Telomere bouquet protein 2 (bqt2), found in Schizosaccharomyces pombe (strain 972 / ATCC 24843) (Fission yeast).